The chain runs to 239 residues: UPF0173 metal-dependent hydrolase rrnAC0300 (239 aa).

The protein belongs to the UPF0173 family.

In Haloarcula marismortui (strain ATCC 43049 / DSM 3752 / JCM 8966 / VKM B-1809) (Halobacterium marismortui), this protein is UPF0173 metal-dependent hydrolase rrnAC0300.